We begin with the raw amino-acid sequence, 46 residues long: Large ribosomal subunit protein bL34 (46 aa).

Basic residues predominate over residues 1–17 (MTKRTLRGSVRKKKRTS). The interval 1–26 (MTKRTLRGSVRKKKRTSGFRARMETP) is disordered.

This sequence belongs to the bacterial ribosomal protein bL34 family.

In Pseudanabaena sp. (strain PCC 6903), this protein is Large ribosomal subunit protein bL34 (rpmH).